Consider the following 226-residue polypeptide: Putative pyridoxamine 5'-phosphate oxidase (226 aa).

16–19 provides a ligand contact to pyridoxal 5'-phosphate; it reads LNSH. 72-75 contacts FMN; it reads RMVL. K77 serves as a coordination point for pyridoxal 5'-phosphate. Residues 87–88, 93–94, and Q116 each bind FMN; these read YT and RK. Pyridoxal 5'-phosphate contacts are provided by Y134, R138, and S142. FMN-binding positions include 151-152 and W199; that span reads QS. 205–207 provides a ligand contact to pyridoxal 5'-phosphate; sequence RLH. Position 209 (R209) interacts with FMN.

The protein belongs to the pyridoxamine 5'-phosphate oxidase family. Homodimer. It depends on FMN as a cofactor.

The catalysed reaction is pyridoxamine 5'-phosphate + O2 + H2O = pyridoxal 5'-phosphate + H2O2 + NH4(+). It catalyses the reaction pyridoxine 5'-phosphate + O2 = pyridoxal 5'-phosphate + H2O2. The protein operates within cofactor metabolism; pyridoxal 5'-phosphate salvage; pyridoxal 5'-phosphate from pyridoxamine 5'-phosphate: step 1/1. Its pathway is cofactor metabolism; pyridoxal 5'-phosphate salvage; pyridoxal 5'-phosphate from pyridoxine 5'-phosphate: step 1/1. Catalyzes the oxidation of either pyridoxine 5'-phosphate (PNP) or pyridoxamine 5'-phosphate (PMP) into pyridoxal 5'-phosphate (PLP). This chain is Putative pyridoxamine 5'-phosphate oxidase, found in Caenorhabditis elegans.